A 100-amino-acid chain; its full sequence is Integration host factor subunit alpha (100 aa).

It belongs to the bacterial histone-like protein family. As to quaternary structure, heterodimer of an alpha and a beta chain.

In terms of biological role, this protein is one of the two subunits of integration host factor, a specific DNA-binding protein that functions in genetic recombination as well as in transcriptional and translational control. In Hahella chejuensis (strain KCTC 2396), this protein is Integration host factor subunit alpha.